We begin with the raw amino-acid sequence, 70 residues long: Small ribosomal subunit protein bS21 (70 aa).

It belongs to the bacterial ribosomal protein bS21 family.

The chain is Small ribosomal subunit protein bS21 from Nitratiruptor sp. (strain SB155-2).